A 137-amino-acid chain; its full sequence is uncharacterized protein (137 aa).

Positions 1–34 (MAALSRALGPLRTPAPPLWIGLFLVATGSQQSLA) are cleaved as a signal peptide. The segment covering 33–45 (LAQPLPGNTTEAT) has biased composition (polar residues). Disordered stretches follow at residues 33–54 (LAQPLPGNTTEATPRSLRASGS) and 98–137 (VLSPLHRGPSGHTEASAQRSHMGKLKEPQPQDHKPGLGAS). A glycan (N-linked (GlcNAc...) asparagine) is linked at Asn40. The segment covering 121-137 (KLKEPQPQDHKPGLGAS) has biased composition (basic and acidic residues).

The protein resides in the secreted. This is an uncharacterized protein from Homo sapiens (Human).